The sequence spans 25 residues: Bombinin-like peptide 4 (25 aa).

Position 25 is a phenylalanine amide (phenylalanine 25).

Belongs to the bombinin family. In terms of tissue distribution, expressed by the skin glands.

The protein resides in the secreted. Functionally, has antimicrobial activity, but no hemolytic activity. Preference on killing Gram-negative non-enteric bacteria. This Bombina orientalis (Oriental fire-bellied toad) protein is Bombinin-like peptide 4.